The following is a 376-amino-acid chain: Chaperone protein DnaJ (376 aa).

The 66-residue stretch at 5 to 70 (DYYEVLGVGR…DKKAAYDQFG (66 aa)) folds into the J domain. Residues 132–210 (GLTKELRIPT…CHGDGRVEKS (79 aa)) form a CR-type zinc finger. 8 residues coordinate Zn(2+): cysteine 145, cysteine 148, cysteine 162, cysteine 165, cysteine 184, cysteine 187, cysteine 198, and cysteine 201. CXXCXGXG motif repeat units lie at residues 145-152 (CDLCDGSG), 162-169 (CTTCHGQG), 184-191 (CPTCHGRG), and 198-205 (CTKCHGDG).

This sequence belongs to the DnaJ family. Homodimer. Requires Zn(2+) as cofactor.

It localises to the cytoplasm. Its function is as follows. Participates actively in the response to hyperosmotic and heat shock by preventing the aggregation of stress-denatured proteins and by disaggregating proteins, also in an autonomous, DnaK-independent fashion. Unfolded proteins bind initially to DnaJ; upon interaction with the DnaJ-bound protein, DnaK hydrolyzes its bound ATP, resulting in the formation of a stable complex. GrpE releases ADP from DnaK; ATP binding to DnaK triggers the release of the substrate protein, thus completing the reaction cycle. Several rounds of ATP-dependent interactions between DnaJ, DnaK and GrpE are required for fully efficient folding. Also involved, together with DnaK and GrpE, in the DNA replication of plasmids through activation of initiation proteins. In Shewanella putrefaciens (strain CN-32 / ATCC BAA-453), this protein is Chaperone protein DnaJ.